Here is a 132-residue protein sequence, read N- to C-terminus: Dinoflagellate viral nucleoprotein 5 (132 aa).

Basic residues predominate over residues 1-44 (MAAMKKAMKVKKSAKKSAKKSGKKGGMKKKAKRVSKVARGKRAK). Residues 1–84 (MAAMKKAMKV…KKQSEHGKKI (84 aa)) form a disordered region. Positions 57–66 (GGLTKNSLVK) are enriched in polar residues.

Post-translationally, phosphorylated.

Its subcellular location is the nucleus. The protein resides in the chromosome. DNA-binding protein, which similarly to histones, may compact DNA into chromatin. The sequence is that of Dinoflagellate viral nucleoprotein 5 from Hematodinium sp.